A 298-amino-acid polypeptide reads, in one-letter code: Small ribosomal subunit biogenesis GTPase RsgA (298 aa).

One can recognise a CP-type G domain in the interval 67–228 (TNELIRPPIC…VADTPGFSSL (162 aa)). 116–119 (TKMD) contacts GTP. Residue T166 is modified to Phosphothreonine. 171–179 (GQSGVGKSS) is a binding site for GTP. Positions 252, 257, 259, and 265 each coordinate Zn(2+).

It belongs to the TRAFAC class YlqF/YawG GTPase family. RsgA subfamily. Monomer, but able to form dimers. Associates with 30S ribosomal subunit; a phospho-mimetic mutation increases association. Probably binds 16S rRNA. Zn(2+) serves as cofactor. In vitro phosphorylated mostly on Thr (with lower signal on Ser) by PrkC in the presence of poly-L-Lys or myelin basic protein, dephosphorylated by PrpC. Most in vitro phosphorylation occurs on Thr-166, in vivo phosphorylation has not been detected, but it might vary during the cell cycle.

It localises to the cytoplasm. Its function is as follows. One of several proteins that assist in the late maturation steps of the functional core of the 30S ribosomal subunit. Helps release RbfA from mature subunits. May play a role in the assembly of ribosomal proteins into the subunit. Circularly permuted GTPase with a low level of activity and slow catalytic turnover, does not act on ATP. GTPase activity is stimulated by the presence of 30S or 70S ribosomes, phosphorylation increases stimulation. Depletion results in increased sensitivity to protein synthesis inhibitors that block the peptide channel or peptidyl transferase center on the ribosome, suggesting this protein functions in conjunction with the ribosome in vivo. Decreasing levels of protein lead to an increase in free 30S and 50S ribosomal subunits and a decrease in assembled 70S ribosomes. Suggested to serve as a specific transcription factor for proteins involved in late stages of peptidoglycan synthesis. The chain is Small ribosomal subunit biogenesis GTPase RsgA from Bacillus subtilis (strain 168).